Reading from the N-terminus, the 1637-residue chain is Surface protein (1637 aa).

The N-terminal stretch at 1–48 (MNKNSKKKLDFLPNKLNKYSIRRFTVGTASILVGATLIFGVANDQAEA) is a signal peptide. Disordered regions lie at residues 49–305 (AENN…RTQV), 689–719 (VQKG…GEPT), and 739–1611 (PQGH…NGTL). Residues 56 to 65 (KQDDSSDASK) show a composition bias toward basic and acidic residues. The segment covering 69–83 (NVQTIEQSSANSNES) has biased composition (polar residues). Composition is skewed to basic and acidic residues over residues 90–106 (DVTK…EKAN), 127–180 (EAPK…KATT), and 188–264 (ETSK…KVET). Positions 289–298 (AKSNSNAQPS) are enriched in polar residues. G5 domains follow at residues 654-737 (QADL…TPEE), 783-865 (HGPK…GGEE), 911-993 (HGPK…GGEE), 1039-1121 (HGPK…GGEE), and 1167-1250 (HGPK…APEI). A compositionally biased stretch (basic and acidic residues) spans 779 to 817 (DVTKHGPKAGEPEVTKEEIPFEKKREFNPDLKPGEEKVT). A compositionally biased stretch (low complexity) spans 818-832 (QEGQTGEKTTTTPTT). The span at 907–945 (DVTKHGPKAGEPEVTKEEIPFEKKREFNPDLKPGEEKVT) shows a compositional bias: basic and acidic residues. Positions 946–960 (QEGQTGEKTTTTPTT) are enriched in low complexity. The segment covering 1035–1073 (DVTKHGPKAGEPEVTKEEIPFEKKREFNPDLKPGEEKVT) has biased composition (basic and acidic residues). Residues 1074–1088 (QEGQTGEKTTTTPTT) show a composition bias toward low complexity. A compositionally biased stretch (basic and acidic residues) spans 1163-1189 (DVTKHGPKAGEPEVTKEEIPYETKRVL). 2 stretches are compositionally biased toward acidic residues: residues 1282-1291 (TGEIIEEPQD) and 1302-1580 (SDAD…DSDS). A run of 141 repeats spans residues 1301-1302 (DS), 1303-1304 (DA), 1305-1306 (DS), 1307-1308 (DS), 1309-1310 (DA), 1311-1312 (DS), 1313-1314 (DS), 1315-1316 (DA), 1317-1318 (DS), 1319-1320 (DS), 1321-1322 (DA), 1323-1324 (DS), 1325-1326 (DS), 1327-1328 (DA), 1329-1330 (DS), 1331-1332 (DS), 1333-1334 (DS), 1335-1336 (DS), 1337-1338 (DS), 1339-1340 (DS), 1341-1342 (DS), 1343-1344 (DS), 1345-1346 (DA), 1347-1348 (DS), 1349-1350 (DS), 1351-1352 (DS), 1353-1354 (DS), 1355-1356 (DS), 1357-1358 (DA), 1359-1360 (DS), 1361-1362 (DS), 1363-1364 (DA), 1365-1366 (DS), 1367-1368 (DS), 1369-1370 (DA), 1371-1372 (DS), 1373-1374 (DS), 1375-1376 (DS), 1377-1378 (DA), 1379-1380 (DS), 1381-1382 (DS), 1383-1384 (DS), 1385-1386 (DA), 1387-1388 (DS), 1389-1390 (DS), 1391-1392 (DS), 1393-1394 (DS), 1395-1396 (DS), 1397-1398 (DA), 1399-1400 (DS), 1401-1402 (DS), 1403-1404 (DS), 1405-1406 (DS), 1407-1408 (DS), 1409-1410 (DA), 1411-1412 (DS), 1413-1414 (DS), 1415-1416 (DA), 1417-1418 (DS), 1419-1420 (DS), 1421-1422 (DS), 1423-1424 (DS), 1425-1426 (DS), 1427-1428 (DA), 1429-1430 (DS), 1431-1432 (DS), 1433-1434 (DS), 1435-1436 (DS), 1437-1438 (DS), 1439-1440 (DA), 1441-1442 (DS), 1443-1444 (DS), 1445-1446 (DA), 1447-1448 (DS), 1449-1450 (DS), 1451-1452 (DA), 1453-1454 (DS), 1455-1456 (DS), 1457-1458 (DA), 1459-1460 (DS), 1461-1462 (DS), 1463-1464 (DS), 1465-1466 (DS), 1467-1468 (DS), 1469-1470 (DA), 1471-1472 (DS), 1473-1474 (DS), 1475-1476 (DA), 1477-1478 (DS), 1479-1480 (DS), 1481-1482 (DA), 1483-1484 (DS), 1485-1486 (DS), 1487-1488 (DA), 1489-1490 (DS), 1491-1492 (DS), 1493-1494 (DS), 1495-1496 (DS), 1497-1498 (DS), 1499-1500 (DA), 1501-1502 (DS), 1503-1504 (DS), 1505-1506 (DS), 1507-1508 (DS), 1509-1510 (DS), 1511-1512 (DS), 1513-1514 (DA), 1515-1516 (DS), 1517-1518 (DS), 1519-1520 (DA), 1521-1522 (DS), 1523-1524 (DS), 1525-1526 (DS), 1527-1528 (DA), 1529-1530 (DS), 1531-1532 (DS), 1533-1534 (DA), 1535-1536 (DS), 1537-1538 (DS), 1539-1540 (DA), 1541-1542 (DG), 1543-1544 (DS), 1545-1546 (DA), 1547-1548 (DS), 1549-1550 (DS), 1551-1552 (DA), 1553-1554 (DS), 1555-1556 (DS), 1557-1558 (DS), 1559-1560 (DS), 1561-1562 (DS), 1563-1564 (DS), 1565-1566 (DS), 1567-1568 (DS), 1569-1570 (DA), 1571-1572 (DS), 1573-1574 (DS), 1575-1576 (DS), 1577-1578 (DS), 1579-1580 (DS), and 1581-1582 (DA). The tract at residues 1301-1582 (DSDADSDSDA…DSDSDSDSDA (282 aa)) is 141 X 2 AA tandem repeats of D-[SAG]. Residues 1581–1599 (DADRDHNDKTDKPNNKELP) show a composition bias toward basic and acidic residues. The short motif at 1598–1602 (LPDTG) is the LPXTG sorting signal element. Position 1601 is a pentaglycyl murein peptidoglycan amidated threonine (threonine 1601). Residues 1602 to 1637 (GNDAQNNGTLFGSLFAALGGLFLVGRRRKNKNNEEK) constitute a propeptide, removed by sortase.

It localises to the secreted. Its subcellular location is the cell wall. Could have a role in preventing adhesion at some stages during an infection. The sequence is that of Surface protein (pls) from Staphylococcus aureus.